The primary structure comprises 437 residues: Mannan endo-1,4-beta-mannosidase A (437 aa).

An N-terminal signal peptide occupies residues 1–19 (MMMLSKSLLSAATAASALA). Positions 20-27 (AVLQPVPR) are excised as a propeptide. Residues 28 to 376 (ASSFVTISGT…VDAINGGTTT (349 aa)) are catalytic. Cys-53 and Cys-56 form a disulfide bridge. Asn-157 and Asn-184 each carry an N-linked (GlcNAc...) asparagine glycan. Glu-196 (proton donor/acceptor) is an active-site residue. 196-198 (EPR) lines the substrate pocket. Residues Cys-199 and Cys-202 are joined by a disulfide bond. Glu-232 and Trp-274 together coordinate substrate. An N-linked (GlcNAc...) asparagine glycan is attached at Asn-277. The cysteines at positions 292 and 299 are disulfide-linked. Residue Glu-303 is the Nucleophile of the active site. Cys-311 and Cys-361 are disulfide-bonded. A glycan (N-linked (GlcNAc...) asparagine) is linked at Asn-355. The segment at 372 to 399 (GGTTTPPPVSSTTTTSSRTSSTPPPPGG) is disordered. The tract at residues 377-399 (PPPVSSTTTTSSRTSSTPPPPGG) is linker. Low complexity predominate over residues 381–392 (SSTTTTSSRTSS). The 36-residue stretch at 400–435 (SCSPLYGQCGGSGYTGPTCCAQGTCIYSNYWYSQCL) folds into the CBM1 domain.

The protein belongs to the glycosyl hydrolase 5 (cellulase A) family. In terms of assembly, monomer.

The protein localises to the secreted. The catalysed reaction is Random hydrolysis of (1-&gt;4)-beta-D-mannosidic linkages in mannans, galactomannans and glucomannans.. Its function is as follows. Endo-1,4-mannanase that catalyzes the random hydrolysis of (1-&gt;4)-beta-D-mannosidic linkages in mannans and heteromannans. It is a crucial enzyme for depolymerization of seed galactomannans and wood galactoglucomannans. Active against locust bean gum and ivory nut mannan, releasing mainly tri- and disaccharides. Also has transglycosylation activity. Transglycosylation of two mannotrioses into a mannohexaose is the major transglycosylation route. This is Mannan endo-1,4-beta-mannosidase A from Hypocrea jecorina (strain ATCC 56765 / BCRC 32924 / NRRL 11460 / Rut C-30) (Trichoderma reesei).